The sequence spans 305 residues: MPKVGIIYNDIKPVAGRVAIELKDKLTTAGWDVSITSSIGGILGYSNPESPVCHTPIDGLTPPGFDSEMKFAIVLGGDGTVLAASRQVAPCGIPILAINTGHMGFLTETYLNQLPQAIDQAIAGEYEIEERAMLTVKVLRGESVLWEALCLNEMVLHREPLTSMCHFEIAVGRHAPVDIAADGVIVSTPTGSTAYSLSAGGPVVTPGVPALQLVPICPHSLASRALVFPDTEPVNIYPVNIPRLVMVVDGNGGCYIFPEDRVYLERSPYSVKFIRLQPPEFFRILREKLGWGLPHIAKPTSVELP.

Aspartate 78 (proton acceptor) is an active-site residue. Residues 78-79 (DG), 152-153 (NE), aspartate 182, 193-198 (TAYSLS), and asparagine 251 contribute to the NAD(+) site.

It belongs to the NAD kinase family. Requires a divalent metal cation as cofactor.

The protein resides in the cytoplasm. The catalysed reaction is NAD(+) + ATP = ADP + NADP(+) + H(+). Involved in the regulation of the intracellular balance of NAD and NADP, and is a key enzyme in the biosynthesis of NADP. Catalyzes specifically the phosphorylation on 2'-hydroxyl of the adenosine moiety of NAD to yield NADP. The sequence is that of NAD kinase 2 from Trichormus variabilis (strain ATCC 29413 / PCC 7937) (Anabaena variabilis).